The chain runs to 381 residues: Cytochrome b (381 aa).

4 helical membrane passes run 34–54, 78–99, 114–134, and 179–199; these read FGSLLGLCLIIQIVTGLFLAM, WLIRNIHANGASLFFVCVYIHI, WNIGVILLFLLMATAFVGYVL, and FFAFHFLLPFLITALMVIHVL. Heme b-binding residues include His-84 and His-98. His-183 and His-197 together coordinate heme b. An a ubiquinone-binding site is contributed by His-202. 4 consecutive transmembrane segments (helical) span residues 227–247, 289–309, 321–341, and 348–368; these read YKDALGFLTLLILLGALALFL, LGGVLALLFSILILLLVPLLH, LTQVFFWILVTNMLVLTWIGG, and FILIGQIASITYFSLFLIAMP.

It belongs to the cytochrome b family. As to quaternary structure, the cytochrome bc1 complex contains 3 respiratory subunits (MT-CYB, CYC1 and UQCRFS1), 2 core proteins (UQCRC1 and UQCRC2) and probably 6 low-molecular weight proteins. Heme b serves as cofactor.

It is found in the mitochondrion inner membrane. Its function is as follows. Component of the ubiquinol-cytochrome c reductase complex (complex III or cytochrome b-c1 complex) that is part of the mitochondrial respiratory chain. The b-c1 complex mediates electron transfer from ubiquinol to cytochrome c. Contributes to the generation of a proton gradient across the mitochondrial membrane that is then used for ATP synthesis. In Isurus paucus (Longfin mako shark), this protein is Cytochrome b (mt-cyb).